The following is a 404-amino-acid chain: Cysteine desulfurase IscS (404 aa).

Pyridoxal 5'-phosphate-binding positions include 75 to 76 (AT), N155, Q183, and 203 to 205 (SGH). The residue at position 206 (K206) is an N6-(pyridoxal phosphate)lysine. T243 contributes to the pyridoxal 5'-phosphate binding site. The active-site Cysteine persulfide intermediate is the C328. C328 contributes to the [2Fe-2S] cluster binding site.

Belongs to the class-V pyridoxal-phosphate-dependent aminotransferase family. NifS/IscS subfamily. As to quaternary structure, homodimer. Forms a heterotetramer with IscU, interacts with other sulfur acceptors. It depends on pyridoxal 5'-phosphate as a cofactor.

It localises to the cytoplasm. The enzyme catalyses (sulfur carrier)-H + L-cysteine = (sulfur carrier)-SH + L-alanine. Its pathway is cofactor biosynthesis; iron-sulfur cluster biosynthesis. Master enzyme that delivers sulfur to a number of partners involved in Fe-S cluster assembly, tRNA modification or cofactor biosynthesis. Catalyzes the removal of elemental sulfur and selenium atoms from cysteine and selenocysteine to produce alanine. Functions as a sulfur delivery protein for Fe-S cluster synthesis onto IscU, an Fe-S scaffold assembly protein, as well as other S acceptor proteins. Also functions as a selenium delivery protein in the pathway for the biosynthesis of selenophosphate. The protein is Cysteine desulfurase IscS of Salmonella schwarzengrund (strain CVM19633).